The sequence spans 161 residues: Calmodulin-like protein (161 aa).

4 consecutive EF-hand domains span residues 21–56, 57–92, 93–128, and 129–161; these read EEID…LGQN, PTEQ…MMKE, TDSE…MGMQ, and FSEE…MSNQ. Aspartate 34, aspartate 36, asparagine 38, threonine 40, glutamate 45, aspartate 70, aspartate 72, asparagine 74, glutamine 76, glutamate 81, aspartate 106, aspartate 108, asparagine 110, glutamate 117, aspartate 142, aspartate 144, aspartate 146, glutamate 148, and glutamate 153 together coordinate Ca(2+).

Belongs to the calmodulin family.

This protein resembles calmodulin in sequence but possibly resembles troponin C in function. This Caenorhabditis elegans protein is Calmodulin-like protein (cal-1).